We begin with the raw amino-acid sequence, 256 residues long: Small ribosomal subunit protein eS1B (256 aa).

At alanine 2 the chain carries N-acetylalanine; partial.

It belongs to the eukaryotic ribosomal protein eS1 family. As to quaternary structure, component of the small ribosomal subunit. Mature ribosomes consist of a small (40S) and a large (60S) subunit. The 40S subunit contains about 33 different proteins and 1 molecule of RNA (18S). The 60S subunit contains about 49 different proteins and 3 molecules of RNA (25S, 5.8S and 5S).

It is found in the cytoplasm. This Scheffersomyces stipitis (strain ATCC 58785 / CBS 6054 / NBRC 10063 / NRRL Y-11545) (Yeast) protein is Small ribosomal subunit protein eS1B.